The chain runs to 256 residues: MQWQDHAIILGVKRHGETSVIAEVMTRDRGRHLGLVRSGRSRAMQPVLQAGNAVEVIWRARLDEHLGEFRVEPVTLRAARLMETATAVYGVQAMGALLRLLPERDPHPHLFDALEVILDHLHNPADAGELFVRFELAVLNDLGFGLDLAECAATGARSDLVYVSPKSGRAVSRAAGAPWADKMLLLPPFLSIEGNHAADFDSLSAAFRLTGFFLHRHVYEPRGIEAVAARDGFVQAALKALNPTLRTLSGPNGVSA.

The protein belongs to the RecO family.

Involved in DNA repair and RecF pathway recombination. This chain is DNA repair protein RecO, found in Rhizobium johnstonii (strain DSM 114642 / LMG 32736 / 3841) (Rhizobium leguminosarum bv. viciae).